The sequence spans 193 residues: tRNA (cytidine(56)-2'-O)-methyltransferase (193 aa).

S-adenosyl-L-methionine is bound by residues L86 and 115 to 119 (GGEKV).

The protein belongs to the aTrm56 family. In terms of assembly, homodimer.

The protein localises to the cytoplasm. The enzyme catalyses cytidine(56) in tRNA + S-adenosyl-L-methionine = 2'-O-methylcytidine(56) in tRNA + S-adenosyl-L-homocysteine + H(+). In terms of biological role, specifically catalyzes the AdoMet-dependent 2'-O-ribose methylation of cytidine at position 56 in tRNAs. The sequence is that of tRNA (cytidine(56)-2'-O)-methyltransferase from Haloquadratum walsbyi (strain DSM 16790 / HBSQ001).